Here is a 125-residue protein sequence, read N- to C-terminus: Holo-[acyl-carrier-protein] synthase (125 aa).

2 residues coordinate Mg(2+): Asp-8 and Glu-57.

The protein belongs to the P-Pant transferase superfamily. AcpS family. Mg(2+) serves as cofactor.

It is found in the cytoplasm. The catalysed reaction is apo-[ACP] + CoA = holo-[ACP] + adenosine 3',5'-bisphosphate + H(+). Transfers the 4'-phosphopantetheine moiety from coenzyme A to a Ser of acyl-carrier-protein. The sequence is that of Holo-[acyl-carrier-protein] synthase from Natranaerobius thermophilus (strain ATCC BAA-1301 / DSM 18059 / JW/NM-WN-LF).